A 204-amino-acid polypeptide reads, in one-letter code: Tat proofreading chaperone DmsD (204 aa).

It belongs to the TorD/DmsD family. DmsD subfamily.

Required for biogenesis/assembly of DMSO reductase, but not for the interaction of the DmsA signal peptide with the Tat system. May be part of a chaperone cascade complex that facilitates a folding-maturation pathway for the substrate protein. The protein is Tat proofreading chaperone DmsD of Escherichia coli O157:H7.